Reading from the N-terminus, the 308-residue chain is Porphobilinogen deaminase (308 aa).

Position 242 is an S-(dipyrrolylmethanemethyl)cysteine (cysteine 242).

The protein belongs to the HMBS family. In terms of assembly, monomer. Requires dipyrromethane as cofactor.

The enzyme catalyses 4 porphobilinogen + H2O = hydroxymethylbilane + 4 NH4(+). The protein operates within porphyrin-containing compound metabolism; protoporphyrin-IX biosynthesis; coproporphyrinogen-III from 5-aminolevulinate: step 2/4. Tetrapolymerization of the monopyrrole PBG into the hydroxymethylbilane pre-uroporphyrinogen in several discrete steps. The polypeptide is Porphobilinogen deaminase (Alkalilimnicola ehrlichii (strain ATCC BAA-1101 / DSM 17681 / MLHE-1)).